Reading from the N-terminus, the 1341-residue chain is DNA-directed RNA polymerase subunit beta (1341 aa).

The protein belongs to the RNA polymerase beta chain family. In terms of assembly, the RNAP catalytic core consists of 2 alpha, 1 beta, 1 beta' and 1 omega subunit. When a sigma factor is associated with the core the holoenzyme is formed, which can initiate transcription.

It carries out the reaction RNA(n) + a ribonucleoside 5'-triphosphate = RNA(n+1) + diphosphate. Functionally, DNA-dependent RNA polymerase catalyzes the transcription of DNA into RNA using the four ribonucleoside triphosphates as substrates. This chain is DNA-directed RNA polymerase subunit beta, found in Blochmanniella pennsylvanica (strain BPEN).